Here is a 226-residue protein sequence, read N- to C-terminus: UPF0173 metal-dependent hydrolase Fnod_0635 (226 aa).

This sequence belongs to the UPF0173 family.

This is UPF0173 metal-dependent hydrolase Fnod_0635 from Fervidobacterium nodosum (strain ATCC 35602 / DSM 5306 / Rt17-B1).